A 447-amino-acid chain; its full sequence is UDP-N-acetylmuramate--L-alanine ligase (447 aa).

ATP is bound at residue 115 to 121 (GAHGKTS).

It belongs to the MurCDEF family.

Its subcellular location is the cytoplasm. It carries out the reaction UDP-N-acetyl-alpha-D-muramate + L-alanine + ATP = UDP-N-acetyl-alpha-D-muramoyl-L-alanine + ADP + phosphate + H(+). The protein operates within cell wall biogenesis; peptidoglycan biosynthesis. Functionally, cell wall formation. This is UDP-N-acetylmuramate--L-alanine ligase from Streptococcus thermophilus (strain CNRZ 1066).